We begin with the raw amino-acid sequence, 389 residues long: Urea transporter 1 (389 aa).

The next 5 helical transmembrane spans lie at 53-73, 91-110, 116-136, 143-163, and 173-193; these read PVVL…VFVN, WWAL…ALLL, LIAS…MAVF, FWWL…FSSA, and LPVF…ATGH. N211 is a glycosylation site (N-linked (GlcNAc...) asparagine). 4 helical membrane-spanning segments follow: residues 242-262, 281-301, 310-330, and 333-353; these read GGIF…HAAI, IYFG…GGMF, LLAL…ANFM, and VGLP…LIMT.

It belongs to the urea transporter family. In terms of assembly, homotrimer; each subunit contains a pore through which urea permeates. Identified in a complex with STOM. In terms of tissue distribution, detected in erythrocytes (at protein level). Expressed in spleen erythroblasts and tumoral kidney.

It is found in the cell membrane. The protein localises to the basolateral cell membrane. The catalysed reaction is urea(in) = urea(out). With respect to regulation, inhibited by phloretin and para-chloromercuribenzene sulfonate. Mediates the transport of urea driven by a concentration gradient across the cell membrane of erythrocytes. Also mediates the transport of urea across the cell membrane of the renal inner medullary collecting duct which is critical to the urinary concentrating mechanism. Facilitates water transport in erythrocytes. The protein is Urea transporter 1 (SLC14A1) of Homo sapiens (Human).